A 397-amino-acid polypeptide reads, in one-letter code: Phosphoglycerate kinase (397 aa).

Substrate-binding positions include 21–23 (DVN), Arg-36, 59–62 (HFGR), Arg-119, and Arg-152. Residues Lys-202, Glu-324, and 354–357 (GGDT) contribute to the ATP site.

It belongs to the phosphoglycerate kinase family. Monomer.

It is found in the cytoplasm. It catalyses the reaction (2R)-3-phosphoglycerate + ATP = (2R)-3-phospho-glyceroyl phosphate + ADP. The protein operates within carbohydrate degradation; glycolysis; pyruvate from D-glyceraldehyde 3-phosphate: step 2/5. This Cereibacter sphaeroides (strain ATCC 17029 / ATH 2.4.9) (Rhodobacter sphaeroides) protein is Phosphoglycerate kinase.